A 246-amino-acid chain; its full sequence is Ly6/PLAUR domain-containing protein 4 (246 aa).

The signal sequence occupies residues 1-26 (MILQAWRSLQLLYLLEAISLLPCTEA). Asparagine 117 carries N-linked (GlcNAc...) asparagine glycosylation. The 82-residue stretch at 142-223 (CPSCVGKHDQ…INVLDKSEAV (82 aa)) folds into the UPAR/Ly6 domain. Alanine 225 is lipidated: GPI-anchor amidated alanine. A propeptide spans 226–246 (GHCSQGISWSVLLCLLILLRD) (removed in mature form).

The protein resides in the cell membrane. The chain is Ly6/PLAUR domain-containing protein 4 (Lypd4) from Mus musculus (Mouse).